A 120-amino-acid chain; its full sequence is Large ribosomal subunit protein uL18 (120 aa).

Belongs to the universal ribosomal protein uL18 family. As to quaternary structure, part of the 50S ribosomal subunit; part of the 5S rRNA/L5/L18/L25 subcomplex. Contacts the 5S and 23S rRNAs.

Its function is as follows. This is one of the proteins that bind and probably mediate the attachment of the 5S RNA into the large ribosomal subunit, where it forms part of the central protuberance. The polypeptide is Large ribosomal subunit protein uL18 (Maricaulis maris (strain MCS10) (Caulobacter maris)).